Here is a 138-residue protein sequence, read N- to C-terminus: Phospholipase A2 EC3 (138 aa).

Positions 1 to 16 (MRTLWIVAVWLMGVEG) are cleaved as a signal peptide. 7 disulfide bridges follow: Cys-42–Cys-131, Cys-44–Cys-60, Cys-59–Cys-111, Cys-65–Cys-138, Cys-66–Cys-104, Cys-73–Cys-97, and Cys-91–Cys-102. Residues Tyr-43, Gly-45, and Gly-47 each contribute to the Ca(2+) site. His-63 is an active-site residue. Asp-64 provides a ligand contact to Ca(2+). Asp-105 is an active-site residue.

The protein belongs to the phospholipase A2 family. Group II subfamily. Requires Ca(2+) as cofactor.

It is found in the secreted. The enzyme catalyses a 1,2-diacyl-sn-glycero-3-phosphocholine + H2O = a 1-acyl-sn-glycero-3-phosphocholine + a fatty acid + H(+). PA2 catalyzes the calcium-dependent hydrolysis of the 2-acyl groups in 3-sn-phosphoglycerides. This is Phospholipase A2 EC3 from Echis coloratus (Carpet viper).